The sequence spans 511 residues: Histidine ammonia-lyase (511 aa).

A cross-link (5-imidazolinone (Ala-Gly)) is located at residues 143-145; that stretch reads ASG. A 2,3-didehydroalanine (Ser) modification is found at Ser144.

The protein belongs to the PAL/histidase family. Post-translationally, contains an active site 4-methylidene-imidazol-5-one (MIO), which is formed autocatalytically by cyclization and dehydration of residues Ala-Ser-Gly.

It is found in the cytoplasm. The catalysed reaction is L-histidine = trans-urocanate + NH4(+). It participates in amino-acid degradation; L-histidine degradation into L-glutamate; N-formimidoyl-L-glutamate from L-histidine: step 1/3. This is Histidine ammonia-lyase from Vibrio cholerae serotype O1 (strain ATCC 39315 / El Tor Inaba N16961).